The sequence spans 207 residues: Inner membrane-spanning protein YciB (207 aa).

Transmembrane regions (helical) follow at residues 3–23, 51–71, 78–98, 105–125, 150–170, and 178–198; these read FLFD…AEGQ, VLLA…WLLL, TMLW…VWFH, WKPS…HAVF, FMWI…AYSF, and FKLF…GLYL.

This sequence belongs to the YciB family.

It is found in the cell inner membrane. Plays a role in cell envelope biogenesis, maintenance of cell envelope integrity and membrane homeostasis. This is Inner membrane-spanning protein YciB from Methylibium petroleiphilum (strain ATCC BAA-1232 / LMG 22953 / PM1).